We begin with the raw amino-acid sequence, 249 residues long: Type I iodothyronine deiodinase (249 aa).

The Extracellular segment spans residues 1–12; sequence MGLPQPGLWLKR. The helical; Signal-anchor for type III membrane protein transmembrane segment at 13–33 threads the bilayer; the sequence is LWVLLEVAVHVVVGKVLLILF. Residues 34 to 249 lie on the Cytoplasmic side of the membrane; the sequence is PDRVKRNILA…VRAVLEKLHS (216 aa). The active site involves Sec126. Residue Sec126 is a non-standard amino acid, selenocysteine.

The protein belongs to the iodothyronine deiodinase family. As to quaternary structure, predominantly monomer. Can form homodimers but homodimerization is not essential for enzyme activity.

It is found in the cell membrane. Its subcellular location is the endoplasmic reticulum membrane. It localises to the basolateral cell membrane. The enzyme catalyses 3,3',5-triiodo-L-thyronine + iodide + A + H(+) = L-thyroxine + AH2. It carries out the reaction 3,3',5'-triiodo-L-thyronine + iodide + A + H(+) = L-thyroxine + AH2. The catalysed reaction is 3,3'-diiodo-L-thyronine + iodide + A + H(+) = 3,3',5'-triiodo-L-thyronine + AH2. It catalyses the reaction 3,3'-diiodo-L-thyronine + iodide + A + H(+) = 3,3',5-triiodo-L-thyronine + AH2. The enzyme catalyses 3'-iodo-L-thyronine + iodide + A + H(+) = 3',5'-diiodo-L-thyronine + AH2. It carries out the reaction 3-iodo-L-thyronine + iodide + A + H(+) = 3,5-diiodo-L-thyronine + AH2. The catalysed reaction is 3-iodo-L-thyronine + iodide + A + H(+) = 3,3'-diiodo-L-thyronine + AH2. It catalyses the reaction 3,3'-diiodothyronamine + iodide + A + H(+) = 3,3',5'-triiodothyronamine + AH2. The enzyme catalyses 3'-iodothyronamine + iodide + A + H(+) = 3',5'-diiodothyronamine + AH2. It carries out the reaction 3-iodothyronamine + iodide + A + H(+) = 3,3'-diiodothyronamine + AH2. The catalysed reaction is 3,3'-diiodothyronamine + iodide + A + H(+) = 3,3',5-triiodothyronamine + AH2. It catalyses the reaction 3-iodothyronamine + iodide + A + H(+) = 3,5-diiodothyronamine + AH2. The enzyme catalyses 3,3'-diiodo-L-thyronine sulfate + iodide + A + H(+) = 3,3',5'-triiodo-L-thyronine sulfate + AH2. It carries out the reaction 3,3',5'-triiodo-L-thyronine sulfate + iodide + A + H(+) = L-thyroxine sulfate + AH2. The catalysed reaction is 3,3'-diiodo-L-thyronine sulfate + iodide + A + H(+) = 3,3',5-triiodo-L-thyronine sulfate + AH2. Its activity is regulated as follows. Deiodination of substrates 3,3',5'-triiodothyronine, 3,3',5'-triiodothyronamine and 3',5'- diiodothyronamine are inhibited by 6n-propyl-2-thiouracil (PTU). Its function is as follows. Plays a crucial role in the metabolism of thyroid hormones (TH) and has specific roles in TH activation and inactivation by deiodination. Catalyzes the deiodination of L-thyroxine (T4) to 3,5,3'-triiodothyronine (T3), 3,3',5'-triiodothyronine (rT3) to 3,3'-diiodothyronine (3,3'-T2) and 3',5'-diiodothyronine (3',5'-T2) to 3'-monoiodothyronine (3'-T1) via outer-ring deiodination (ORD). Catalyzes the deiodination of T4 to 3,3',5'-triiodothyronine (rT3) via inner-ring deiodination (IRD). Catalyzes the deiodination of T3 to 3,3'-T2, 3,5-diiodothyronine (3,5-T2) to 3- monoiodothyronine (3-T1) and 3,3'-T2 to 3-T1 via IRD. Catalyzes the phenolic ring deiodinations of 3,3',5'-triiodothyronamine and 3',5'-diiodothyronamine. Catalyzes the phenolic ring deiodination of 3,3'-diiodothyronamine and tyrosyl ring deiodinations of 3,5,3'-triiodothyronamine and 3,5-diiodothyronamine. Catalyzes the deiodination of L-thyroxine sulfate and 3,3',5-triiodo-L-thyronine sulfate via IRD and of 3,3',5'-triiodo-L-thyronine sulfate via ORD. The chain is Type I iodothyronine deiodinase (DIO1) from Homo sapiens (Human).